Here is a 628-residue protein sequence, read N- to C-terminus: Isoleucine--tRNA ligase (628 aa).

Positions 505 to 509 (KMSKR) match the 'KMSKS' region motif. Lys-508 contacts ATP.

The protein belongs to the class-I aminoacyl-tRNA synthetase family.

It catalyses the reaction tRNA(Ile) + L-isoleucine + ATP = L-isoleucyl-tRNA(Ile) + AMP + diphosphate. This Antonospora locustae (Microsporidian parasite) protein is Isoleucine--tRNA ligase.